Reading from the N-terminus, the 687-residue chain is Ferric vulnibactin receptor VuuA (687 aa).

Positions 1–37 are cleaved as a signal peptide; sequence MAALRPARTSVAEKKTFKLHALSAVVMGLCASGQAYA. Residues 63 to 185 enclose the TBDR plug domain; it reads TIYDTSSSVQ…SAGAIVMKTN (123 aa). In terms of domain architecture, TBDR beta-barrel spans 190–687; that stretch reads HFESAVKAGV…MIGASLQLNF (498 aa). The TonB C-terminal box motif lies at 670 to 687; sequence EPLKQQPRMIGASLQLNF.

Belongs to the TonB-dependent receptor family.

The protein resides in the cell outer membrane. Its function is as follows. Involved in the uptake of iron in complex with vulnibactin, a catecholate siderophore synthesized by V.vulnificus. Binds and transports ferric vulnibactin across the outer membrane. The energy source is provided by the inner membrane TonB system. The polypeptide is Ferric vulnibactin receptor VuuA (Vibrio vulnificus).